Consider the following 153-residue polypeptide: 3-dehydroquinate dehydratase (153 aa).

Tyr-26 acts as the Proton acceptor in catalysis. Residues Asn-77, His-83, and Asp-90 each coordinate substrate. His-103 serves as the catalytic Proton donor. Substrate is bound by residues Leu-104–Ser-105 and Arg-114.

It belongs to the type-II 3-dehydroquinase family. In terms of assembly, homododecamer.

It carries out the reaction 3-dehydroquinate = 3-dehydroshikimate + H2O. Its pathway is metabolic intermediate biosynthesis; chorismate biosynthesis; chorismate from D-erythrose 4-phosphate and phosphoenolpyruvate: step 3/7. Functionally, catalyzes a trans-dehydration via an enolate intermediate. This is 3-dehydroquinate dehydratase from Colwellia psychrerythraea (strain 34H / ATCC BAA-681) (Vibrio psychroerythus).